We begin with the raw amino-acid sequence, 67 residues long: MNLKLALVLLLTVINVGMLPGATSNGNIKTDIKCYRNSHCNFHCEKSYYCQGSKCVRKRCNCYNCPL.

The first 24 residues, 1–24 (MNLKLALVLLLTVINVGMLPGATS), serve as a signal peptide directing secretion. Cystine bridges form between cysteine 34-cysteine 55, cysteine 40-cysteine 60, cysteine 44-cysteine 62, and cysteine 50-cysteine 65.

The protein belongs to the short scorpion toxin superfamily. Potassium channel inhibitor family. Alpha-KTx 06 subfamily. As to expression, expressed by the venom gland.

The protein resides in the secreted. In terms of biological role, inhibits voltage-gated potassium channels. In Opisthacanthus cayaporum (South American scorpion), this protein is Potassium channel toxin alpha-KTx 6.16.